A 129-amino-acid chain; its full sequence is Small ribosomal subunit protein uS11 (129 aa).

Belongs to the universal ribosomal protein uS11 family. Part of the 30S ribosomal subunit. Interacts with proteins S7 and S18. Binds to IF-3.

Located on the platform of the 30S subunit, it bridges several disparate RNA helices of the 16S rRNA. Forms part of the Shine-Dalgarno cleft in the 70S ribosome. The sequence is that of Small ribosomal subunit protein uS11 from Chelativorans sp. (strain BNC1).